The following is a 485-amino-acid chain: Tektin-5 (485 aa).

Coiled coils occupy residues 114–185 (RLTD…EVNC), 225–247 (QEQM…DAQH), 307–385 (QNMR…MAKE), and 421–444 (TIDD…QLLV).

The protein belongs to the tektin family. In terms of assembly, microtubule inner protein component of sperm flagellar doublet microtubules. Interacts with TEKT3. In terms of processing, ubiquitinated, leading to its degradation. Deubiquitinated by USP16, promoting its stability.

It localises to the cytoplasm. Its subcellular location is the cytoskeleton. The protein localises to the flagellum axoneme. Sperm-specific microtubule inner protein (MIP) part of the dynein-decorated doublet microtubules (DMTs) in flagellar axoneme. Forms an extensive interaction network in different conformations that reinforces the helix bundle composed by other tektin proteins (TEKT1 to TEKT4) and MIPs to anchor the tektin bundle onto the tubulin wall of A-tubule of the sperm flagellum. The protein is Tektin-5 (TEKT5) of Homo sapiens (Human).